The sequence spans 101 residues: Protein PrgJ (101 aa).

The protein to S.flexneri MxiI.

Its function is as follows. Required for invasion of epithelial cells. The polypeptide is Protein PrgJ (prgJ) (Salmonella typhimurium (strain LT2 / SGSC1412 / ATCC 700720)).